Here is a 282-residue protein sequence, read N- to C-terminus: Elongation factor Ts (282 aa).

An involved in Mg(2+) ion dislocation from EF-Tu region spans residues 80–83 (TDFV).

It belongs to the EF-Ts family.

The protein localises to the cytoplasm. Associates with the EF-Tu.GDP complex and induces the exchange of GDP to GTP. It remains bound to the aminoacyl-tRNA.EF-Tu.GTP complex up to the GTP hydrolysis stage on the ribosome. The protein is Elongation factor Ts (tsf) of Chlamydia trachomatis serovar D (strain ATCC VR-885 / DSM 19411 / UW-3/Cx).